Here is a 180-residue protein sequence, read N- to C-terminus: NADH-quinone oxidoreductase subunit I (180 aa).

4Fe-4S ferredoxin-type domains lie at 50-80 and 90-119; these read LTRDPDGEERCVACNLCAVACPVGCISLQKA and EFFRINFSRCIFCGMCEEACPTTAIQMTPD. Residues Cys60, Cys63, Cys66, Cys70, Cys99, Cys102, Cys105, and Cys109 each coordinate [4Fe-4S] cluster.

Belongs to the complex I 23 kDa subunit family. NDH-1 is composed of 14 different subunits. Subunits NuoA, H, J, K, L, M, N constitute the membrane sector of the complex. Requires [4Fe-4S] cluster as cofactor.

It localises to the cell inner membrane. The catalysed reaction is a quinone + NADH + 5 H(+)(in) = a quinol + NAD(+) + 4 H(+)(out). Functionally, NDH-1 shuttles electrons from NADH, via FMN and iron-sulfur (Fe-S) centers, to quinones in the respiratory chain. The immediate electron acceptor for the enzyme in this species is believed to be ubiquinone. Couples the redox reaction to proton translocation (for every two electrons transferred, four hydrogen ions are translocated across the cytoplasmic membrane), and thus conserves the redox energy in a proton gradient. In Acinetobacter baylyi (strain ATCC 33305 / BD413 / ADP1), this protein is NADH-quinone oxidoreductase subunit I.